Consider the following 95-residue polypeptide: Co-chaperonin GroES (95 aa).

A compositionally biased stretch (basic and acidic residues) spans V12–K22. The disordered stretch occupies residues V12 to G38.

Belongs to the GroES chaperonin family. Heptamer of 7 subunits arranged in a ring. Interacts with the chaperonin GroEL.

It is found in the cytoplasm. In terms of biological role, together with the chaperonin GroEL, plays an essential role in assisting protein folding. The GroEL-GroES system forms a nano-cage that allows encapsulation of the non-native substrate proteins and provides a physical environment optimized to promote and accelerate protein folding. GroES binds to the apical surface of the GroEL ring, thereby capping the opening of the GroEL channel. In Chloroherpeton thalassium (strain ATCC 35110 / GB-78), this protein is Co-chaperonin GroES.